The chain runs to 294 residues: Sarcotoxin-2A (294 aa).

An N-terminal signal peptide occupies residues 1–22 (MKSFVFFAACMAIIALSSLVQA). The propeptide at 23 to 24 (YP) is removed by a dipeptidylpeptidase. Position 25 is a pyrrolidone carboxylic acid (Gln-25). Arg-293 is modified (arginine amide).

Belongs to the attacin/sarcotoxin-2 family. In terms of tissue distribution, synthesized by the fat body and is eventually secreted into the hemolymph.

It localises to the secreted. Its function is as follows. Sarcotoxin II is an antibacterial protein which plays a role in the inflammatory response of this insect. The main effect of sarcotoxin II on E.coli may be the inhibition of cell wall synthesis, including septum formation. This chain is Sarcotoxin-2A, found in Sarcophaga peregrina (Flesh fly).